We begin with the raw amino-acid sequence, 302 residues long: Mas-related G-protein coupled receptor member A3 (302 aa).

The Extracellular segment spans residues methionine 1–aspartate 17. Asparagine 2 carries N-linked (GlcNAc...) asparagine glycosylation. A helical transmembrane segment spans residues leucine 18 to leucine 38. At glycine 39–alanine 46 the chain is on the cytoplasmic side. The chain crosses the membrane as a helical span at residues phenylalanine 47–isoleucine 67. A glycan (N-linked (GlcNAc...) asparagine) is linked at asparagine 68. Topologically, residues asparagine 68–glycine 81 are extracellular. Residues isoleucine 82–leucine 102 traverse the membrane as a helical segment. Residues serine 103–threonine 129 are Cytoplasmic-facing. A helical transmembrane segment spans residues valine 130–cysteine 150. Residues glycine 151–aspartate 167 lie on the Extracellular side of the membrane. Asparagine 159 carries an N-linked (GlcNAc...) asparagine glycan. The chain crosses the membrane as a helical span at residues isoleucine 168–leucine 188. Residues leucine 189–threonine 211 are Cytoplasmic-facing. A helical membrane pass occupies residues valine 212–isoleucine 232. Over alanine 233–serine 242 the chain is Extracellular. Residues proline 243–glycine 263 form a helical membrane-spanning segment. Over serine 264 to proline 302 the chain is Cytoplasmic.

Belongs to the G-protein coupled receptor 1 family. Mas subfamily. Expressed exclusively in dorsal root ganglia and nodose ganglia. Expressed in a subset of sensory neurons that includes nociceptors. Expressed in the subclass of non-peptidergic sensory neurons that are IB4(+) and VR1(-).

It localises to the cell membrane. Orphan receptor. May be a receptor for RFamide-family neuropeptides such as NPFF and NPAF, which are analgesic in vivo. May regulate nociceptor function and/or development, including the sensation or modulation of pain. Activated by the antimalarial drug chloroquine. Mediates chloroquine-induced itch, in a histamine-independent manner. This Mus musculus (Mouse) protein is Mas-related G-protein coupled receptor member A3 (Mrgpra3).